A 1057-amino-acid polypeptide reads, in one-letter code: Glycine dehydrogenase (decarboxylating), mitochondrial (1057 aa).

The transit peptide at 1–86 (MERARRLANR…GVGYPSQSRS (86 aa)) directs the protein to the mitochondrion. Basic and acidic residues predominate over residues 18 to 27 (SEAKQNRKTE). Positions 18-47 (SEAKQNRKTESTSTTTTTPLPFSLSGSSSR) are disordered. The span at 28 to 47 (STSTTTTTPLPFSLSGSSSR) shows a compositional bias: low complexity. K792 bears the N6-(pyridoxal phosphate)lysine mark.

Belongs to the GcvP family. In terms of assembly, homodimer. The glycine cleavage system is composed of four proteins: P, T, L and H. Pyridoxal 5'-phosphate serves as cofactor. As to expression, highly expressed in leaves. Detected in roots and embryos.

It localises to the mitochondrion. The catalysed reaction is N(6)-[(R)-lipoyl]-L-lysyl-[glycine-cleavage complex H protein] + glycine + H(+) = N(6)-[(R)-S(8)-aminomethyldihydrolipoyl]-L-lysyl-[glycine-cleavage complex H protein] + CO2. Functionally, the glycine cleavage system catalyzes the degradation of glycine. The P protein binds the alpha-amino group of glycine through its pyridoxal phosphate cofactor; CO(2) is released and the remaining methylamine moiety is then transferred to the lipoamide cofactor of the H protein. This is Glycine dehydrogenase (decarboxylating), mitochondrial (GDCSP) from Pisum sativum (Garden pea).